A 575-amino-acid polypeptide reads, in one-letter code: Transport inhibitor response 1-like protein Os04g0395600 (575 aa).

The 45-residue stretch at 1-45 (MTYFPEEVVEHIFSFLPAQRDRNTVSLVCKVWYEIERLSRRGVFV) folds into the F-box domain. K69 provides a ligand contact to 1D-myo-inositol hexakisphosphate. Residues 76-77 (DF) form an interaction with auxin-responsive proteins region. Residues 108–109 (KR) and R340 contribute to the 1D-myo-inositol hexakisphosphate site. Positions 343–348 (PSDFYV) are interaction with auxin-responsive proteins. 1D-myo-inositol hexakisphosphate is bound at residue 396–398 (RFR). The interaction with auxin-responsive proteins stretch occupies residues 400–404 (CILEP). Position 431 (R431) interacts with 1D-myo-inositol hexakisphosphate. An interaction with auxin-responsive proteins region spans residues 459-460 (AF). Residues 479 to 480 (RK) and R504 contribute to the 1D-myo-inositol hexakisphosphate site.

In terms of assembly, part of a SCF (SKP1-cullin-F-box) protein ligase complex. May interact with auxin and auxin-responsive proteins.

It is found in the nucleus. It participates in protein modification; protein ubiquitination. In Oryza sativa subsp. japonica (Rice), this protein is Transport inhibitor response 1-like protein Os04g0395600.